The sequence spans 245 residues: 3-deoxy-manno-octulosonate cytidylyltransferase (245 aa).

The protein belongs to the KdsB family.

Its subcellular location is the cytoplasm. The catalysed reaction is 3-deoxy-alpha-D-manno-oct-2-ulosonate + CTP = CMP-3-deoxy-beta-D-manno-octulosonate + diphosphate. Its pathway is nucleotide-sugar biosynthesis; CMP-3-deoxy-D-manno-octulosonate biosynthesis; CMP-3-deoxy-D-manno-octulosonate from 3-deoxy-D-manno-octulosonate and CTP: step 1/1. It participates in bacterial outer membrane biogenesis; lipopolysaccharide biosynthesis. Activates KDO (a required 8-carbon sugar) for incorporation into bacterial lipopolysaccharide in Gram-negative bacteria. The chain is 3-deoxy-manno-octulosonate cytidylyltransferase from Desulfatibacillum aliphaticivorans.